The sequence spans 444 residues: Phosphoglucosamine mutase (444 aa).

Catalysis depends on serine 101, which acts as the Phosphoserine intermediate. Residues serine 101, aspartate 240, aspartate 242, and aspartate 244 each coordinate Mg(2+). Serine 101 carries the phosphoserine modification.

It belongs to the phosphohexose mutase family. It depends on Mg(2+) as a cofactor. In terms of processing, activated by phosphorylation.

It carries out the reaction alpha-D-glucosamine 1-phosphate = D-glucosamine 6-phosphate. Catalyzes the conversion of glucosamine-6-phosphate to glucosamine-1-phosphate. The protein is Phosphoglucosamine mutase of Sphingopyxis alaskensis (strain DSM 13593 / LMG 18877 / RB2256) (Sphingomonas alaskensis).